Reading from the N-terminus, the 1128-residue chain is Exportin-6 (1128 aa).

Residues isoleucine 31–serine 97 form the Importin N-terminal domain.

The protein belongs to the exportin family.

It is found in the nucleus. It localises to the cytoplasm. Functionally, mediates the nuclear export of actin and profilin-actin complexes in somatic cells. In Danio rerio (Zebrafish), this protein is Exportin-6 (xpo6).